The sequence spans 649 residues: Probable cyclic nucleotide-gated ion channel 12 (649 aa).

Topologically, residues 1–43 are cytoplasmic; the sequence is MNHRRSKFARIDSMGVDGKLKSVRGRLKKVYGKMKTLENWRKT. The chain crosses the membrane as a helical span at residues 44 to 64; the sequence is VLLACVVALAIDPLFLFIPLI. Residues 65 to 76 lie on the Extracellular side of the membrane; it reads DSQRFCFTFDKT. A helical transmembrane segment spans residues 77 to 97; the sequence is LVAVVCVIRTFIDTFYVIHII. Over 98-128 the chain is Cytoplasmic; sequence YYLITETIAPRSQASLRGEIVVHSKATLKTR. The chain crosses the membrane as a helical span at residues 129–149; that stretch reads LLFHFIVDIISVLPIPQVVVL. At 150 to 162 the chain is on the extracellular side; that stretch reads TLIPLSASLVSER. Residues 163 to 183 form a helical membrane-spanning segment; that stretch reads ILKWIILSQYVPRIIRMYPLY. Topologically, residues 184-200 are cytoplasmic; sequence KEVTRAFGTVAESKWAG. A helical membrane pass occupies residues 201–221; it reads AALNLFLYMLHSYVFGAFWYL. At 222-329 the chain is on the extracellular side; that stretch reads SSIERKSKCW…QNLETSNSAG (108 aa). Residues 330–350 form a helical membrane-spanning segment; the sequence is EIFFAIIICVSGLLLFAVLIG. At 351 to 649 the chain is on the cytoplasmic side; sequence NVQKYLQSST…ADLEFAKAEA (299 aa). A nucleoside 3',5'-cyclic phosphate-binding positions include 436 to 559 and glutamate 507; that span reads LNIM…TFRL. The segment at 545 to 560 is calmodulin-binding; sequence LNVFQRQKLQRTFRLY. One can recognise an IQ domain in the interval 565 to 594; that stretch reads RSWAAFFIQAAWRKHCKRKLSKTRDNENIP. Residues 618–649 are disordered; the sequence is RRKDTADCSSSPDMSPPVPHKPADLEFAKAEA. Residues 638–649 are compositionally biased toward basic and acidic residues; the sequence is KPADLEFAKAEA.

Belongs to the cyclic nucleotide-gated cation channel (TC 1.A.1.5) family. In terms of assembly, homotetramer or heterotetramer.

The protein resides in the cell membrane. Functionally, probable cyclic nucleotide-gated ion channel. The sequence is that of Probable cyclic nucleotide-gated ion channel 12 (CNGC12) from Arabidopsis thaliana (Mouse-ear cress).